Consider the following 152-residue polypeptide: UPF0178 protein Bcer98_3021 (152 aa).

It belongs to the UPF0178 family.

This is UPF0178 protein Bcer98_3021 from Bacillus cytotoxicus (strain DSM 22905 / CIP 110041 / 391-98 / NVH 391-98).